The chain runs to 478 residues: TFIIA-alpha and beta-like factor (478 aa).

The disordered stretch occupies residues 309-427 (VKQPRNIEEP…SGDDVSEQDV (119 aa)). The span at 390–401 (SISNEDSATNSS) shows a compositional bias: polar residues. Residues 411–427 (VEEDPLNSGDDVSEQDV) show a composition bias toward acidic residues.

This sequence belongs to the TFIIA subunit 1 family. In terms of tissue distribution, testis specific. Detected in adult testis mostly in round and elongating spermatids (at protein level). Detected in testis.

It localises to the nucleus. In terms of biological role, may function as a testis specific transcription factor. Binds DNA in conjunction with GTF2A2 and TBP (the TATA-binding protein) and together with GTF2A2, allows mRNA transcription. This Homo sapiens (Human) protein is TFIIA-alpha and beta-like factor (GTF2A1L).